Reading from the N-terminus, the 69-residue chain is Small ribosomal subunit protein bS21 (69 aa).

This sequence belongs to the bacterial ribosomal protein bS21 family.

In Treponema pallidum (strain Nichols), this protein is Small ribosomal subunit protein bS21 (rpsU).